The sequence spans 525 residues: uncharacterized protein (525 aa).

The signal sequence occupies residues 1 to 21 (MLECLSALLVLFAGGGGSVLA). The Extracellular portion of the chain corresponds to 22–448 (AVQSKTVADP…ISAASQLDER (427 aa)). Residues 242 to 264 (KVSSENCSKDTDDKSGSKKERNT) form a disordered region. Residues 449-469 (IFIFTAITVSITTLMMLGFSY) form a helical membrane-spanning segment. The Cytoplasmic segment spans residues 470 to 525 (RSRVSFRDHSIDDSDDDNDWSDDEVEFDEEYFYSLPVSIPEKGISLDKMAQQLGVE).

It localises to the membrane. This is an uncharacterized protein from Saccharomyces cerevisiae (strain RM11-1a) (Baker's yeast).